We begin with the raw amino-acid sequence, 678 residues long: MAGSVVAAAAAAGGGTGSSCDALYRELWHACAGPLVTVPRQGELVYYFPQGHMEQLEASTDQQLDQHLPLFNLPSKILCKVVNVELRAETDSDEVYAQIMLQPEADQNELTSPKPEPHEPEKCNVHSFCKTLTASDTSTHGGFSVLRRHAEECLPPLDMTQNPPWQELVARDLHGNEWHFRHIFRGQPRRHLLTTGWSVFVSSKRLVAGDAFIFLRGENGELRVGVRRLMRQLNNMPSSVISSHSMHLGVLATASHAISTGTLFSVFYKPRTSQSEFVVSANKYLEAKNSKISVGMRFKMRFEGDEAPERRFSGTIIGVGSMSTSPWANSDWRSLKVQWDEPSVVPRPDRVSPWELEPLAVSNSQPSPQPPARNKRARPPASNSIAPELPPVFGLWKSSAESTQGFSFSGLQRTQELYPSSPNPIFSTSLNVGFSTKNEPSALSNKHFYWPMRETRANSYSASISKVPSEKKQEPSSAGCRLFGIEISSAVEATSPLAAVSGVGQDQPAASVDAESDQLSQPSHANKSDAPAASSEPSPHETQSRQVRSCTKVIMQGMAVGRAVDLTRLHGYDDLRCKLEEMFDIQGELSASLKKWKVVYTDDEDDMMLVGDDPWPEFCSMVKRIYIYTYEEAKQLTPKSKLPIIGDAIKPNPNKQSPESDMPHSDLDSTAPVTDKDC.

The segment at residues 128 to 230 (FCKTLTASDT…ELRVGVRRLM (103 aa)) is a DNA-binding region (TF-B3). 2 disordered regions span residues 360 to 386 (AVSN…NSIA) and 502 to 547 (GVGQ…SRQV). In terms of domain architecture, PB1 spans 548-641 (RSCTKVIMQG…EAKQLTPKSK (94 aa)). The tract at residues 643–678 (PIIGDAIKPNPNKQSPESDMPHSDLDSTAPVTDKDC) is disordered.

The protein belongs to the ARF family. Homodimers and heterodimers. In terms of tissue distribution, expressed in roots, culms, leaves and young panicles.

It localises to the nucleus. Its function is as follows. Auxin response factors (ARFs) are transcriptional factors that bind specifically to the DNA sequence 5'-TGTCTC-3' found in the auxin-responsive promoter elements (AuxREs). In Oryza sativa subsp. japonica (Rice), this protein is Auxin response factor 7 (ARF7).